The chain runs to 27 residues: uncharacterized protein (27 aa).

A helical membrane pass occupies residues 3–23; the sequence is IILWAVLIIFLIGLLVVTGVF.

The protein resides in the cell inner membrane. This is an uncharacterized protein from Escherichia coli (strain K12).